Reading from the N-terminus, the 465-residue chain is Ribulose bisphosphate carboxylase large chain (465 aa).

The residue at position 4 (Lys4) is an N6,N6,N6-trimethyllysine. 2 residues coordinate substrate: Asn113 and Thr163. Residue Lys165 is the Proton acceptor of the active site. Lys167 contacts substrate. Mg(2+) is bound by residues Lys191, Asp193, and Glu194. Lys191 is subject to N6-carboxylysine. His284 serves as the catalytic Proton acceptor. The substrate site is built by Arg285, His317, and Ser369.

This sequence belongs to the RuBisCO large chain family. Type I subfamily. As to quaternary structure, heterohexadecamer of 8 large chains and 8 small chains; disulfide-linked. The disulfide link is formed within the large subunit homodimers. It depends on Mg(2+) as a cofactor. Post-translationally, the disulfide bond which can form in the large chain dimeric partners within the hexadecamer appears to be associated with oxidative stress and protein turnover.

The protein localises to the plastid. It localises to the chloroplast. It catalyses the reaction 2 (2R)-3-phosphoglycerate + 2 H(+) = D-ribulose 1,5-bisphosphate + CO2 + H2O. The catalysed reaction is D-ribulose 1,5-bisphosphate + O2 = 2-phosphoglycolate + (2R)-3-phosphoglycerate + 2 H(+). In terms of biological role, ruBisCO catalyzes two reactions: the carboxylation of D-ribulose 1,5-bisphosphate, the primary event in carbon dioxide fixation, as well as the oxidative fragmentation of the pentose substrate in the photorespiration process. Both reactions occur simultaneously and in competition at the same active site. In Casuarina equisetifolia (Beach she-oak), this protein is Ribulose bisphosphate carboxylase large chain.